The chain runs to 133 residues: Small ribosomal subunit protein uS8 (133 aa).

It belongs to the universal ribosomal protein uS8 family. Part of the 30S ribosomal subunit.

Functionally, one of the primary rRNA binding proteins, it binds directly to 16S rRNA central domain where it helps coordinate assembly of the platform of the 30S subunit. The polypeptide is Small ribosomal subunit protein uS8 (Ignicoccus hospitalis (strain KIN4/I / DSM 18386 / JCM 14125)).